Here is a 291-residue protein sequence, read N- to C-terminus: Homoserine kinase (291 aa).

Residue Arg80–Ala90 coordinates ATP.

Belongs to the GHMP kinase family. Homoserine kinase subfamily.

It is found in the cytoplasm. It catalyses the reaction L-homoserine + ATP = O-phospho-L-homoserine + ADP + H(+). The protein operates within amino-acid biosynthesis; L-threonine biosynthesis; L-threonine from L-aspartate: step 4/5. Catalyzes the ATP-dependent phosphorylation of L-homoserine to L-homoserine phosphate. This chain is Homoserine kinase, found in Haloquadratum walsbyi (strain DSM 16790 / HBSQ001).